A 635-amino-acid chain; its full sequence is Dual specificity protein kinase zak2 (635 aa).

2 Protein kinase domains span residues 9–249 and 299–585; these read WEEI…HRLI and NKDD…QIYF. ATP contacts are provided by residues 15-23 and K45; that span reads IGSCNSKSR. Residue D124 is the Proton acceptor of the active site. Residues 305 to 313 and K326 each bind ATP; that span reads GGDGFFSVV. The active-site Proton acceptor is the D427.

In the N-terminal section; belongs to the protein kinase superfamily. Ser/Thr protein kinase family. The protein in the C-terminal section; belongs to the protein kinase superfamily. TKL Tyr protein kinase family. In terms of processing, C-terminal tyrosine kinase domain is capable of autophosphorylation, in vitro. In terms of tissue distribution, zakA and zak2 are coexpressed in prestalk cell population, zakA is enriched in pstB populations and zak1 in pstA populations. ZakA and zak2 are coexpressed in prespore cells, zakA expression levels are 10 fold higher than zak2.

The catalysed reaction is L-seryl-[protein] + ATP = O-phospho-L-seryl-[protein] + ADP + H(+). It carries out the reaction L-threonyl-[protein] + ATP = O-phospho-L-threonyl-[protein] + ADP + H(+). It catalyses the reaction L-tyrosyl-[protein] + ATP = O-phospho-L-tyrosyl-[protein] + ADP + H(+). Positive regulator of gsk3/gskA activity required for cell pattern formation and a downstream effector of carC. The kinases, gsk3/gskA, zakA and zak2, form part of a signaling pathway that responds to extracellular cyclic AMP. The pathway has a role in transcriptional regulation; required to direct prespore/spore fates during development. Zak2 negatively regulates prestalk differentiation by regulating expression of ecmA. Phosphorylates Y-214 of gsk3/gskA, in vitro. In Dictyostelium discoideum (Social amoeba), this protein is Dual specificity protein kinase zak2 (zak2).